Here is a 330-residue protein sequence, read N- to C-terminus: 6-phosphogluconolactonase (330 aa).

This sequence belongs to the cycloisomerase 2 family.

It carries out the reaction 6-phospho-D-glucono-1,5-lactone + H2O = 6-phospho-D-gluconate + H(+). It participates in carbohydrate degradation; pentose phosphate pathway; D-ribulose 5-phosphate from D-glucose 6-phosphate (oxidative stage): step 2/3. In terms of biological role, catalyzes the hydrolysis of 6-phosphogluconolactone to 6-phosphogluconate. This Erwinia tasmaniensis (strain DSM 17950 / CFBP 7177 / CIP 109463 / NCPPB 4357 / Et1/99) protein is 6-phosphogluconolactonase.